Reading from the N-terminus, the 938-residue chain is Glutamate receptor ionotropic, NMDA 1 (938 aa).

A signal peptide spans 1–18; that stretch reads MSTMHLLTFALLFSCSFA. The Extracellular portion of the chain corresponds to 19–559; that stretch reads RAACDPKIVN…TLDSFMQPFQ (541 aa). N-linked (GlcNAc...) asparagine glycans are attached at residues Asn-61, Asn-203, Asn-239, Asn-276, Asn-300, Asn-350, Asn-368, Asn-440, Asn-471, and Asn-491. A disulfide bond links Cys-79 and Cys-308. Disulfide bonds link Cys-420–Cys-454 and Cys-436–Cys-455. Residues Pro-516, Thr-518, and Arg-523 each coordinate glycine. A helical membrane pass occupies residues 560–580; that stretch reads STLWLLVGLSVHVVAVMLYLL. Residues 581 to 602 lie on the Cytoplasmic side of the membrane; that stretch reads DRFSPFGRFKVNSEEEEEDALT. The segment at residues 603–624 is an intramembrane region (discontinuously helical); sequence LSSAMWFSWGVLLNSGIGEGAP. The interval 603–624 is pore-forming; it reads LSSAMWFSWGVLLNSGIGEGAP. Topologically, residues 625 to 630 are cytoplasmic; that stretch reads RSFSAR. Residues 631-647 form a helical membrane-spanning segment; it reads ILGMVWAGFAMIIVASY. Topologically, residues 648–812 are extracellular; it reads TANLAAFLVL…NAPATLTFEN (165 aa). An N-linked (GlcNAc...) asparagine glycan is attached at Asn-674. 2 residues coordinate glycine: Ser-688 and Asp-732. The cysteines at positions 744 and 798 are disulfide-linked. Asn-771 carries N-linked (GlcNAc...) asparagine glycosylation. Residues 813 to 833 form a helical membrane-spanning segment; sequence MAGVFMLVAGGIVAGIFLIFI. Residues 834 to 938 lie on the Cytoplasmic side of the membrane; the sequence is EIAYKRHKDA…LQLCSRHRES (105 aa). The residue at position 889 (Ser-889) is a Phosphoserine; by PKC. The segment at 889 to 938 is disordered; sequence SSFKRRRSSKDTSTGGGRGALQNQKDTVLPRRAIEREEGQLQLCSRHRES. Ser-890 carries the phosphoserine modification. Ser-896 and Ser-897 each carry phosphoserine; by PKC. A compositionally biased stretch (basic and acidic residues) spans 916–927; sequence VLPRRAIEREEG.

It belongs to the glutamate-gated ion channel (TC 1.A.10.1) family. NR1/GRIN1 subfamily. In terms of assembly, heterotetramer; the NMDAR subunits are modular and harbor tiered domains that function in concert to regulate opening and closing of the cation-selective ion channel pore. Forms heterotetrameric channels composed of two GluN1/zeta subunits (GRIN1), and two identical GluN2/epsilon subunits (GRIN2A, GRIN2B, GRIN2C or GRIN2D) or GluN3 subunits (GRIN3A or GRIN3B) (in vitro). Can also form heterotetrameric channels that contain at least two GluN1 subunits and at least two different GluN2 subunits (or a combination of one GluN2 and one GluN3 subunits) (in vitro). In vivo, the subunit composition may vary in function of the expression levels of the different subunits. Found in a complex with GRIN2A or GRIN2B, GRIN3A and PPP2CB. Found in a complex with GRIN2A or GRIN2B and GRIN3B. Interacts with SNX27 (via PDZ domain); the interaction is required for recycling to the plasma membrane when endocytosed and prevent degradation in lysosomes. Interacts with DLG4 and MPDZ. Interacts with LRFN1 and LRFN2. Interacts with MYZAP. Found in a complex with DLG4 and PRR7. Found in a complex with GRIN2B and PRR7. Interacts with PRR7; the interaction is reduced following NMDA receptor activity. NMDA is probably regulated by C-terminal phosphorylation of an isoform of GRIN1 by PKC. Dephosphorylated on Ser-897 probably by protein phosphatase 2A (PPP2CB). Its phosphorylated state is influenced by the formation of the NMDAR-PPP2CB complex and the NMDAR channel activity. In terms of tissue distribution, detected in brain (at protein level). Detected in brain.

It is found in the cell membrane. The protein localises to the postsynaptic cell membrane. The protein resides in the postsynaptic density membrane. Its subcellular location is the synaptic cell membrane. The enzyme catalyses Ca(2+)(in) = Ca(2+)(out). The catalysed reaction is Na(+)(in) = Na(+)(out). It catalyses the reaction K(+)(in) = K(+)(out). Component of N-methyl-D-aspartate (NMDA) receptors (NMDARs) that function as heterotetrameric, ligand-gated cation channels with high calcium permeability and voltage-dependent block by Mg(2+). NMDARs participate in synaptic plasticity for learning and memory formation by contributing to the long-term potentiation (LTP). Channel activation requires binding of the neurotransmitter L-glutamate to the GluN2 subunit, glycine or D-serine binding to the GluN1 subunit, plus membrane depolarization to eliminate channel inhibition by Mg(2+). NMDARs mediate simultaneously the potasium efflux and the influx of calcium and sodium. Each GluN2 or GluN3 subunit confers differential attributes to channel properties, including activation, deactivation and desensitization kinetics, pH sensitivity, Ca2(+) permeability, and binding to allosteric modulators. This is Glutamate receptor ionotropic, NMDA 1 from Mus musculus (Mouse).